The primary structure comprises 359 residues: Peptide chain release factor 1 (359 aa).

The residue at position 236 (glutamine 236) is an N5-methylglutamine.

The protein belongs to the prokaryotic/mitochondrial release factor family. Methylated by PrmC. Methylation increases the termination efficiency of RF1.

Its subcellular location is the cytoplasm. Its function is as follows. Peptide chain release factor 1 directs the termination of translation in response to the peptide chain termination codons UAG and UAA. The sequence is that of Peptide chain release factor 1 from Streptococcus pyogenes serotype M12 (strain MGAS2096).